The chain runs to 130 residues: Lysozyme C (130 aa).

The C-type lysozyme domain occupies 1–130 (KTYERCELAR…VSPWIRDCGL (130 aa)). Cystine bridges form between C6/C128, C30/C116, C65/C81, and C77/C95. Active-site residues include E35 and D53.

Belongs to the glycosyl hydrolase 22 family. In terms of assembly, monomer.

Its subcellular location is the secreted. It carries out the reaction Hydrolysis of (1-&gt;4)-beta-linkages between N-acetylmuramic acid and N-acetyl-D-glucosamine residues in a peptidoglycan and between N-acetyl-D-glucosamine residues in chitodextrins.. Lysozymes have primarily a bacteriolytic function; those in tissues and body fluids are associated with the monocyte-macrophage system and enhance the activity of immunoagents. The protein is Lysozyme C (LYZ) of Chelonia mydas (Green sea-turtle).